Consider the following 489-residue polypeptide: Pluviatolide synthase (489 aa).

Residues Ser6–Phe26 traverse the membrane as a helical segment. A heme-binding site is contributed by Cys432.

The protein belongs to the cytochrome P450 family. Heme is required as a cofactor. In terms of tissue distribution, expressed in leaves, rhizomes and stems.

Its subcellular location is the membrane. It catalyses the reaction (-)-matairesinol + reduced [NADPH--hemoprotein reductase] + O2 = (-)-pluviatolide + oxidized [NADPH--hemoprotein reductase] + 2 H2O + H(+). Its pathway is aromatic compound metabolism; phenylpropanoid biosynthesis. Functionally, cytochrome P450 involved in the biosynthesis of etoposide, a chemotherapeutic compound of the topoisomerase inhibitor family. Catalyzes the conversion of matairesinol to pluviatolide. The polypeptide is Pluviatolide synthase (Sinopodophyllum hexandrum (Himalayan may apple)).